The chain runs to 374 residues: Speckle-type POZ protein B (374 aa).

The 131-residue stretch at Lys-31–Val-161 folds into the MATH domain. The required for nuclear localization stretch occupies residues Val-71–Gly-191. The BTB domain occupies Gln-173 to Leu-297. The tract at residues Leu-297–Ser-355 is homodimerization.

It belongs to the Tdpoz family. In terms of assembly, homodimer. Part of cullin-RING-based BCR (BTB-CUL3-RBX1) E3 ubiquitin-protein ligase complexes that contain CUL3 and SPOP, plus a target protein.

It is found in the nucleus. The protein localises to the nucleus speckle. It functions in the pathway protein modification; protein ubiquitination. Functionally, component of a cullin-RING-based BCR (BTB-CUL3-RBX1) E3 ubiquitin-protein ligase complex that mediates the ubiquitination of target proteins, leading most often to their proteasomal degradation. The protein is Speckle-type POZ protein B (spop-b) of Xenopus laevis (African clawed frog).